The chain runs to 371 residues: Bifunctional enzyme IspD/IspF (371 aa).

Residues 1 to 210 (MSEISLIMLA…LDLPKPSFEI (210 aa)) form a 2-C-methyl-D-erythritol 4-phosphate cytidylyltransferase region. A 2-C-methyl-D-erythritol 2,4-cyclodiphosphate synthase region spans residues 211 to 371 (FTGNGFDVHE…NLKYFDWTRL (161 aa)). Positions 217 and 219 each coordinate a divalent metal cation. 4-CDP-2-C-methyl-D-erythritol 2-phosphate-binding positions include 217–219 (DVH) and 243–244 (HS). His-251 is a binding site for a divalent metal cation. 4-CDP-2-C-methyl-D-erythritol 2-phosphate is bound by residues 265–267 (DIG), 270–274 (YPDTD), 341–344 (TTTE), Phe-348, and Arg-351.

The protein in the N-terminal section; belongs to the IspD/TarI cytidylyltransferase family. IspD subfamily. It in the C-terminal section; belongs to the IspF family. A divalent metal cation serves as cofactor.

The enzyme catalyses 2-C-methyl-D-erythritol 4-phosphate + CTP + H(+) = 4-CDP-2-C-methyl-D-erythritol + diphosphate. The catalysed reaction is 4-CDP-2-C-methyl-D-erythritol 2-phosphate = 2-C-methyl-D-erythritol 2,4-cyclic diphosphate + CMP. It participates in isoprenoid biosynthesis; isopentenyl diphosphate biosynthesis via DXP pathway; isopentenyl diphosphate from 1-deoxy-D-xylulose 5-phosphate: step 2/6. It functions in the pathway isoprenoid biosynthesis; isopentenyl diphosphate biosynthesis via DXP pathway; isopentenyl diphosphate from 1-deoxy-D-xylulose 5-phosphate: step 4/6. In terms of biological role, bifunctional enzyme that catalyzes the formation of 4-diphosphocytidyl-2-C-methyl-D-erythritol from CTP and 2-C-methyl-D-erythritol 4-phosphate (MEP) (IspD), and catalyzes the conversion of 4-diphosphocytidyl-2-C-methyl-D-erythritol 2-phosphate (CDP-ME2P) to 2-C-methyl-D-erythritol 2,4-cyclodiphosphate (ME-CPP) with a corresponding release of cytidine 5-monophosphate (CMP) (IspF). The sequence is that of Bifunctional enzyme IspD/IspF from Campylobacter jejuni subsp. doylei (strain ATCC BAA-1458 / RM4099 / 269.97).